The sequence spans 338 residues: Malate dehydrogenase, mitochondrial (338 aa).

Residues 1-24 constitute a mitochondrion transit peptide; it reads MLSALARPASAVLRRSFSTSAQNN. Residues 31–37 and Asp57 each bind NAD(+); that span reads GASGGIG. Residue Ser33 is glycosylated (O-linked (GlcNAc) serine). Residues Lys78 and Lys91 each carry the N6-acetyllysine; alternate modification. N6-succinyllysine; alternate is present on residues Lys78 and Lys91. The substrate site is built by Arg104 and Arg110. NAD(+) is bound by residues Asn117 and 140–142; that span reads IAN. Asn142 is a binding site for substrate. Lys165 carries the N6-acetyllysine modification. Arg176 contacts substrate. Lys185 is subject to N6-acetyllysine; alternate. Lys185 is modified (N6-succinyllysine; alternate). His200 serves as the catalytic Proton acceptor. Lys203 carries the N6-succinyllysine modification. Residues Lys215 and Lys239 each carry the N6-acetyllysine; alternate modification. 2 positions are modified to N6-succinyllysine; alternate: Lys215 and Lys239. An N6-malonyllysine; alternate modification is found at Lys239. Ser246 carries the post-translational modification Phosphoserine. Position 251 (Met251) interacts with NAD(+). Lys269 carries the N6-succinyllysine modification. N6-acetyllysine; alternate occurs at positions 296, 301, 307, 314, and 324. N6-succinyllysine; alternate occurs at positions 296, 301, 307, 314, and 324. Lys307 carries the post-translational modification N6-malonyllysine; alternate. At Ser326 the chain carries Phosphoserine. An N6-acetyllysine; alternate mark is found at Lys328, Lys329, and Lys335. At Lys328 the chain carries N6-succinyllysine; alternate. N6-malonyllysine; alternate is present on Lys329. Residue Lys335 is modified to N6-succinyllysine; alternate.

It belongs to the LDH/MDH superfamily. MDH type 1 family. As to quaternary structure, homodimer. Acetylation is enhanced after treatment either with trichostin A (TCA) or with nicotinamide (NAM) with the appearance of tri- and tetraacetylations. Glucose also increases acetylation.

The protein localises to the mitochondrion matrix. It catalyses the reaction (S)-malate + NAD(+) = oxaloacetate + NADH + H(+). With respect to regulation, enzyme activity is enhanced by acetylation. The polypeptide is Malate dehydrogenase, mitochondrial (MDH2) (Pongo abelii (Sumatran orangutan)).